The sequence spans 76 residues: cAMP-dependent protein kinase inhibitor alpha (76 aa).

Threonine 2 carries the post-translational modification N-acetylthreonine. A disordered region spans residues 49–76 (KTEGEDDGQRSSTEQSGEAQGEAAKSES).

Belongs to the PKI family. Present at high levels in skeletal muscle and brain but is present at lower levels in heart, testis and liver.

Extremely potent competitive inhibitor of cAMP-dependent protein kinase activity, this protein interacts with the catalytic subunit of the enzyme after the cAMP-induced dissociation of its regulatory chains. The polypeptide is cAMP-dependent protein kinase inhibitor alpha (Pkia) (Mus musculus (Mouse)).